The primary structure comprises 253 residues: U1 small nuclear ribonucleoprotein A (253 aa).

An RRM 1 domain is found at 23 to 102; it reads VTIYINNLNE…KPMRIQYAKT (80 aa). The disordered stretch occupies residues 111–140; it reads DGTFVPRERRKRNDEKPEKKQKREQHHDVS. The RRM 2 domain occupies 179–253; it reads NILFVQNLPH…NQMLISYAKK (75 aa).

The protein belongs to the RRM U1 A/B'' family. As to quaternary structure, component of the spliceosome where it is associated with snRNP U1.

It is found in the nucleus. Its subcellular location is the nucleolus. In terms of biological role, involved in nuclear pre-mRNA splicing. The sequence is that of U1 small nuclear ribonucleoprotein A from Oryza sativa subsp. indica (Rice).